Reading from the N-terminus, the 170-residue chain is Adenine phosphoribosyltransferase (170 aa).

This sequence belongs to the purine/pyrimidine phosphoribosyltransferase family. In terms of assembly, homodimer.

The protein resides in the cytoplasm. It catalyses the reaction AMP + diphosphate = 5-phospho-alpha-D-ribose 1-diphosphate + adenine. It functions in the pathway purine metabolism; AMP biosynthesis via salvage pathway; AMP from adenine: step 1/1. In terms of biological role, catalyzes a salvage reaction resulting in the formation of AMP, that is energically less costly than de novo synthesis. The polypeptide is Adenine phosphoribosyltransferase (Cyanothece sp. (strain PCC 7425 / ATCC 29141)).